Here is a 321-residue protein sequence, read N- to C-terminus: Phosphatidate cytidylyltransferase, mitochondrial (321 aa).

Belongs to the TAM41 family. The cofactor is Mg(2+). Requires Co(2+) as cofactor. Cu(2+) is required as a cofactor.

Its subcellular location is the mitochondrion inner membrane. The catalysed reaction is a 1,2-diacyl-sn-glycero-3-phosphate + CTP + H(+) = a CDP-1,2-diacyl-sn-glycerol + diphosphate. It functions in the pathway phospholipid metabolism; CDP-diacylglycerol biosynthesis; CDP-diacylglycerol from sn-glycerol 3-phosphate: step 3/3. Functionally, catalyzes the formation of CDP-diacylglycerol (CDP-DAG) from phosphatidic acid (PA) in the mitochondrial inner membrane. Required for the biosynthesis of the dimeric phospholipid cardiolipin, which stabilizes supercomplexes of the mitochondrial respiratory chain in the mitochondrial inner membrane. This Caenorhabditis elegans protein is Phosphatidate cytidylyltransferase, mitochondrial.